A 453-amino-acid polypeptide reads, in one-letter code: Bifunctional protein GlmU (453 aa).

The segment at 1–227 (MTQLSVVILA…LMEVEGANNR (227 aa)) is pyrophosphorylase. Residues 9–12 (LAAG), K23, Q74, 79–80 (GT), 101–103 (YGD), G138, E152, N167, and N225 contribute to the UDP-N-acetyl-alpha-D-glucosamine site. D103 provides a ligand contact to Mg(2+). N225 serves as a coordination point for Mg(2+). A linker region spans residues 228 to 248 (LQLAALERYYQKIQAEKLLLA). Residues 249 to 453 (GVTIIDPARF…IQGWQRPTKK (205 aa)) form an N-acetyltransferase region. Residues R331 and K349 each coordinate UDP-N-acetyl-alpha-D-glucosamine. The active-site Proton acceptor is the H361. The UDP-N-acetyl-alpha-D-glucosamine site is built by Y364 and N375. Acetyl-CoA is bound by residues A378, 384–385 (NY), S403, A421, and R438.

The protein in the N-terminal section; belongs to the N-acetylglucosamine-1-phosphate uridyltransferase family. This sequence in the C-terminal section; belongs to the transferase hexapeptide repeat family. In terms of assembly, homotrimer. Requires Mg(2+) as cofactor.

The protein localises to the cytoplasm. It carries out the reaction alpha-D-glucosamine 1-phosphate + acetyl-CoA = N-acetyl-alpha-D-glucosamine 1-phosphate + CoA + H(+). The catalysed reaction is N-acetyl-alpha-D-glucosamine 1-phosphate + UTP + H(+) = UDP-N-acetyl-alpha-D-glucosamine + diphosphate. Its pathway is nucleotide-sugar biosynthesis; UDP-N-acetyl-alpha-D-glucosamine biosynthesis; N-acetyl-alpha-D-glucosamine 1-phosphate from alpha-D-glucosamine 6-phosphate (route II): step 2/2. The protein operates within nucleotide-sugar biosynthesis; UDP-N-acetyl-alpha-D-glucosamine biosynthesis; UDP-N-acetyl-alpha-D-glucosamine from N-acetyl-alpha-D-glucosamine 1-phosphate: step 1/1. It functions in the pathway bacterial outer membrane biogenesis; LPS lipid A biosynthesis. Functionally, catalyzes the last two sequential reactions in the de novo biosynthetic pathway for UDP-N-acetylglucosamine (UDP-GlcNAc). The C-terminal domain catalyzes the transfer of acetyl group from acetyl coenzyme A to glucosamine-1-phosphate (GlcN-1-P) to produce N-acetylglucosamine-1-phosphate (GlcNAc-1-P), which is converted into UDP-GlcNAc by the transfer of uridine 5-monophosphate (from uridine 5-triphosphate), a reaction catalyzed by the N-terminal domain. The polypeptide is Bifunctional protein GlmU (Glaesserella parasuis serovar 5 (strain SH0165) (Haemophilus parasuis)).